Here is a 118-residue protein sequence, read N- to C-terminus: Late cornified envelope protein 1C (118 aa).

The span at 1 to 10 (MSCQQSQQQC) shows a compositional bias: low complexity. Disordered stretches follow at residues 1–23 (MSCQQSQQQCQPPPKCTPKCPPK) and 87–118 (CHRPQSSGCCSQPSGGSSCCGGGSGQHSGGCC). Residues 11–23 (QPPPKCTPKCPPK) are compositionally biased toward pro residues. Positions 90-103 (PQSSGCCSQPSGGS) are enriched in low complexity. Residues 104 to 118 (SCCGGGSGQHSGGCC) are compositionally biased toward gly residues.

This sequence belongs to the LCE family. As to quaternary structure, interacts with CYSRT1. As to expression, skin-specific. Expression was readily detected in adult trunk skin, adult arm skin, fetal skin, penal skin, vulva, esophagus and tongue. Not expressed in the cervix, rectum, lung, colon, or placenta.

Functionally, precursors of the cornified envelope of the stratum corneum. The polypeptide is Late cornified envelope protein 1C (LCE1C) (Homo sapiens (Human)).